We begin with the raw amino-acid sequence, 451 residues long: DNA polymerase IV (451 aa).

Positions 5-187 constitute a UmuC domain; that stretch reads VIHVDMDAFF…LPVGRLWGVG (183 aa). Mg(2+) contacts are provided by Asp-9 and Asp-104. Glu-105 is an active-site residue.

Belongs to the DNA polymerase type-Y family. As to quaternary structure, monomer. The cofactor is Mg(2+).

Its subcellular location is the cytoplasm. It catalyses the reaction DNA(n) + a 2'-deoxyribonucleoside 5'-triphosphate = DNA(n+1) + diphosphate. Its function is as follows. Poorly processive, error-prone DNA polymerase involved in untargeted mutagenesis. Copies undamaged DNA at stalled replication forks, which arise in vivo from mismatched or misaligned primer ends. These misaligned primers can be extended by PolIV. Exhibits no 3'-5' exonuclease (proofreading) activity. May be involved in translesional synthesis, in conjunction with the beta clamp from PolIII. The chain is DNA polymerase IV from Corynebacterium diphtheriae (strain ATCC 700971 / NCTC 13129 / Biotype gravis).